The following is a 215-amino-acid chain: Ependymin-2 (215 aa).

The N-terminal stretch at 1-20 is a signal peptide; that stretch reads MHTVKLLCVVFSCLCAVAWA. N71 and N94 each carry an N-linked (GlcNAc...) asparagine glycan.

It belongs to the ependymin family. In terms of assembly, forms disulfide-linked dimers. Post-translationally, different glycosylation variants are known as EPD-beta and EPD-gamma. Binds calcium through the terminal sialic acids. EPDs are synthesized in the meninx and secreted in the cerebrospinal fluid.

It localises to the secreted. May play a role in neural plasticity. May be involved during axon regeneration. The sequence is that of Ependymin-2 (epd2) from Carassius auratus (Goldfish).